A 500-amino-acid polypeptide reads, in one-letter code: Putative beta-lactamase-like 1 (500 aa).

The protein belongs to the beta-lactamase family.

This chain is Putative beta-lactamase-like 1 (LACTBL1), found in Homo sapiens (Human).